The sequence spans 151 residues: Phosphopantetheine adenylyltransferase (151 aa).

Serine 9 provides a ligand contact to substrate. ATP-binding positions include 9-10 (SF) and histidine 17. Substrate is bound by residues lysine 41, threonine 73, and arginine 87. ATP is bound by residues 88–90 (GLR), glutamate 98, and 122–128 (KAHISST).

Belongs to the bacterial CoaD family. As to quaternary structure, homohexamer. Requires Mg(2+) as cofactor.

Its subcellular location is the cytoplasm. The enzyme catalyses (R)-4'-phosphopantetheine + ATP + H(+) = 3'-dephospho-CoA + diphosphate. The protein operates within cofactor biosynthesis; coenzyme A biosynthesis; CoA from (R)-pantothenate: step 4/5. Reversibly transfers an adenylyl group from ATP to 4'-phosphopantetheine, yielding dephospho-CoA (dPCoA) and pyrophosphate. The polypeptide is Phosphopantetheine adenylyltransferase (Christiangramia forsetii (strain DSM 17595 / CGMCC 1.15422 / KT0803) (Gramella forsetii)).